A 241-amino-acid chain; its full sequence is NEP1-interacting protein 2 (241 aa).

The tract at residues Met-1 to Ser-20 is disordered. At Met-1–His-36 the chain is on the lumenal, thylakoid side. Residues Phe-37 to Leu-57 traverse the membrane as a helical segment. Over Val-58–Ser-76 the chain is Stromal. Residues Gly-77–Phe-97 traverse the membrane as a helical segment. At Glu-98–Ser-109 the chain is on the lumenal, thylakoid side. Residues Gly-110–Val-130 form a helical membrane-spanning segment. The Stromal segment spans residues Arg-131–Ile-241. The RING-type; atypical zinc-finger motif lies at Cys-196–Arg-238.

This sequence belongs to the RING-type zinc finger family. NIP subfamily. In terms of assembly, interacts with RPOT2.

It is found in the plastid. It localises to the chloroplast thylakoid membrane. In terms of biological role, intrinsic thylakoid membrane protein that fixes RPOT2 on the stromal side of the thylakoid membrane. The chain is NEP1-interacting protein 2 (NIP2) from Arabidopsis thaliana (Mouse-ear cress).